The chain runs to 150 residues: SsrA-binding protein (150 aa).

Belongs to the SmpB family.

The protein localises to the cytoplasm. Required for rescue of stalled ribosomes mediated by trans-translation. Binds to transfer-messenger RNA (tmRNA), required for stable association of tmRNA with ribosomes. tmRNA and SmpB together mimic tRNA shape, replacing the anticodon stem-loop with SmpB. tmRNA is encoded by the ssrA gene; the 2 termini fold to resemble tRNA(Ala) and it encodes a 'tag peptide', a short internal open reading frame. During trans-translation Ala-aminoacylated tmRNA acts like a tRNA, entering the A-site of stalled ribosomes, displacing the stalled mRNA. The ribosome then switches to translate the ORF on the tmRNA; the nascent peptide is terminated with the 'tag peptide' encoded by the tmRNA and targeted for degradation. The ribosome is freed to recommence translation, which seems to be the essential function of trans-translation. This is SsrA-binding protein from Rubrobacter xylanophilus (strain DSM 9941 / JCM 11954 / NBRC 16129 / PRD-1).